The chain runs to 213 residues: MIEELAREIVKRFPRNHKETDPFRVLISTVLSQRTRDENTEKASKKLFEVYRTPQELAKAKPEDLYDLIKESGMYRQKAERIVEISRILVEKYGGRVPDSLEELLKLPGVGRKTANIVLWVGFKKPALAVDTHVHRISNRLGWVKTRTPEETEEALKKLLPEDLWGPINGSMVEFGRRICKPQNPLCEECFLKNHCEFYRRRGKGEVRNRTER.

The HhH domain maps to 101–120; sequence LEELLKLPGVGRKTANIVLW. Residues C180, C187, C190, and C196 each coordinate [4Fe-4S] cluster.

The protein belongs to the Nth/MutY family. It depends on [4Fe-4S] cluster as a cofactor.

It catalyses the reaction 2'-deoxyribonucleotide-(2'-deoxyribose 5'-phosphate)-2'-deoxyribonucleotide-DNA = a 3'-end 2'-deoxyribonucleotide-(2,3-dehydro-2,3-deoxyribose 5'-phosphate)-DNA + a 5'-end 5'-phospho-2'-deoxyribonucleoside-DNA + H(+). DNA repair enzyme that has both DNA N-glycosylase activity and AP-lyase activity. The DNA N-glycosylase activity releases various damaged pyrimidines from DNA by cleaving the N-glycosidic bond, leaving an AP (apurinic/apyrimidinic) site. The AP-lyase activity cleaves the phosphodiester bond 3' to the AP site by a beta-elimination, leaving a 3'-terminal unsaturated sugar and a product with a terminal 5'-phosphate. This chain is Endonuclease III, found in Thermotoga maritima (strain ATCC 43589 / DSM 3109 / JCM 10099 / NBRC 100826 / MSB8).